The primary structure comprises 405 residues: Deoxyguanosinetriphosphate triphosphohydrolase-like protein (405 aa).

The 145-residue stretch at 75–219 (RLTHTIEVAQ…AAIADDIAYN (145 aa)) folds into the HD domain.

Belongs to the dGTPase family. Type 2 subfamily.

The chain is Deoxyguanosinetriphosphate triphosphohydrolase-like protein from Rhizobium etli (strain CIAT 652).